A 405-amino-acid polypeptide reads, in one-letter code: Phosphopentomutase (405 aa).

Residues Asp10, Asp305, His310, Asp346, His347, and His358 each contribute to the Mn(2+) site.

The protein belongs to the phosphopentomutase family. The cofactor is Mn(2+).

The protein localises to the cytoplasm. The catalysed reaction is 2-deoxy-alpha-D-ribose 1-phosphate = 2-deoxy-D-ribose 5-phosphate. It carries out the reaction alpha-D-ribose 1-phosphate = D-ribose 5-phosphate. Its pathway is carbohydrate degradation; 2-deoxy-D-ribose 1-phosphate degradation; D-glyceraldehyde 3-phosphate and acetaldehyde from 2-deoxy-alpha-D-ribose 1-phosphate: step 1/2. Functionally, isomerase that catalyzes the conversion of deoxy-ribose 1-phosphate (dRib-1-P) and ribose 1-phosphate (Rib-1-P) to deoxy-ribose 5-phosphate (dRib-5-P) and ribose 5-phosphate (Rib-5-P), respectively. This chain is Phosphopentomutase, found in Methylobacterium sp. (strain 4-46).